Here is a 384-residue protein sequence, read N- to C-terminus: MTNPIIAFKNVSKVFEDSNTVVLKDINFELEEGKFYTLLGASGSGKSTILNIIAGLLEASTGDIYLDGKRINDVPTNKRDVHTVFQNYALFPHMTVFENVAFPLKLKKMDKKEIQKRVQETLKMVRLEGFEKRAIQKLSGGQRQRVAIARAIINQPKVVLLDEPLSALDLKLRTEMQYELRELQQRLGITFVFVTHDQEEALAMSDWIFVMNEGEIVQSGTPVDIYDEPINHFVATFIGESNILSGKMIEDYLVEFNGKRFEAVDGGMRPNESVQVVIRPEDLQITLPDEGKLQVKVDTQLFRGVHYEIIAYDDLGNEWMIHSTRKAIEGEVIGLDFTPEDIHIMRLNETEEEFDARIEEYVDTDDHEDGLINAIEEERNEENL.

Residues Ile-6–Ile-238 form the ABC transporter domain. Gly-40–Ser-47 contributes to the ATP binding site.

Belongs to the ABC transporter superfamily. Spermidine/putrescine importer (TC 3.A.1.11.1) family. The complex is composed of two ATP-binding proteins (PotA), two transmembrane proteins (PotB and PotC) and a solute-binding protein (PotD).

The protein localises to the cell membrane. It carries out the reaction ATP + H2O + polyamine-[polyamine-binding protein]Side 1 = ADP + phosphate + polyamineSide 2 + [polyamine-binding protein]Side 1.. Its function is as follows. Part of the ABC transporter complex PotABCD involved in spermidine/putrescine import. Responsible for energy coupling to the transport system. This is Spermidine/putrescine import ATP-binding protein PotA from Streptococcus agalactiae serotype Ia (strain ATCC 27591 / A909 / CDC SS700).